The chain runs to 510 residues: 2-isopropylmalate synthase (510 aa).

The region spanning 5–267 is the Pyruvate carboxyltransferase domain; it reads LIIFDTTLRD…DTRIDSVHIV (263 aa). Mn(2+) is bound by residues Asp14, His202, His204, and Asn238. The tract at residues 392-510 is regulatory domain; that stretch reads KLLSLTAHSE…SKLERAHPQV (119 aa).

The protein belongs to the alpha-IPM synthase/homocitrate synthase family. LeuA type 1 subfamily. In terms of assembly, homodimer. Requires Mn(2+) as cofactor.

Its subcellular location is the cytoplasm. It carries out the reaction 3-methyl-2-oxobutanoate + acetyl-CoA + H2O = (2S)-2-isopropylmalate + CoA + H(+). It participates in amino-acid biosynthesis; L-leucine biosynthesis; L-leucine from 3-methyl-2-oxobutanoate: step 1/4. Functionally, catalyzes the condensation of the acetyl group of acetyl-CoA with 3-methyl-2-oxobutanoate (2-ketoisovalerate) to form 3-carboxy-3-hydroxy-4-methylpentanoate (2-isopropylmalate). This is 2-isopropylmalate synthase from Nitrosospira multiformis (strain ATCC 25196 / NCIMB 11849 / C 71).